The primary structure comprises 276 residues: Nuclear egress protein 2 (276 aa).

Topologically, residues 1-253 (MAGMGKPYGG…LFRAPRPGPP (253 aa)) are perinuclear space. The span at 212–225 (HSSGAPGPGVAASG) shows a compositional bias: low complexity. The segment at 212 to 237 (HSSGAPGPGVAASGPPAPPGRGPARP) is disordered. Residues 254-274 (ALLLLAAGLFLGAAIWWAVGA) traverse the membrane as a helical segment. Over 275–276 (RL) the chain is Nuclear.

The protein belongs to the herpesviridae NEC2 protein family. Forms a heterohexameric complex with NEC1. In terms of processing, phosphorylated.

Its subcellular location is the host nucleus inner membrane. Its function is as follows. Plays an essential role in virion nuclear egress, the first step of virion release from infected cell. Within the host nucleus, NEC1 interacts with the newly formed capsid through the vertexes and directs it to the inner nuclear membrane by associating with NEC2. Induces the budding of the capsid at the inner nuclear membrane as well as its envelopment into the perinuclear space. There, the NEC1/NEC2 complex promotes the fusion of the enveloped capsid with the outer nuclear membrane and the subsequent release of the viral capsid into the cytoplasm where it will reach the secondary budding sites in the host Golgi or trans-Golgi network. The polypeptide is Nuclear egress protein 2 (Homo sapiens (Human)).